The chain runs to 715 residues: ATP-dependent RecD2 DNA helicase (715 aa).

Residues 1–150 form a not required for helicase activity region; that stretch reads MSAALPAEPF…STLHKMVSSW (150 aa). ATP-binding positions include Gln343 and 363–367; that span reads GTGKS. 2 consecutive DNA-binding regions follow at residues Gly391 and 407–414; that span reads TVHRLLGY. An ATP-binding site is contributed by Gln466. A DNA-binding region is located at residue Val470. Arg493 is a binding site for ATP. 3 consecutive DNA-binding regions follow at residues 554–555, 596–604, and 644–647; these read RK, NDYNNEIFN, and TVHR. Arg679 contributes to the ATP binding site.

Belongs to the RecD family. RecD2 subfamily. As to quaternary structure, monomer; homodimers seem to be inactive.

The enzyme catalyses Couples ATP hydrolysis with the unwinding of duplex DNA at the replication fork by translocating in the 5'-3' direction. This creates two antiparallel DNA single strands (ssDNA). The leading ssDNA polymer is the template for DNA polymerase III holoenzyme which synthesizes a continuous strand.. It carries out the reaction ATP + H2O = ADP + phosphate + H(+). Its function is as follows. DNA-dependent ATPase (ssDNA stimulates the ATPase better than dsDNA) and ATP-dependent 5'-3' DNA helicase. Plays a role in an antioxidant pathway. Involved in DNA damage repair and/or recombination. Appears to move along DNA in single base steps, powered by hydrolysis of 1 molecule of ATP. Has low processivity, unwinds about 15-20 base pairs/second. Short (20 bp) substrates with 5'-overhangs or forked ends are the best substrates, is much less efficient on 52 or 76 bp substrates with 5'-overhangs. The presence of single-stranded DNA-binding protein (SSB) increases unwinding 4-5 fold. Has no activity on blunt DNA or DNA with 3'-overhangs. Requires at least 10 bases of 5'-ssDNA for helicase activity. This is ATP-dependent RecD2 DNA helicase from Deinococcus radiodurans (strain ATCC 13939 / DSM 20539 / JCM 16871 / CCUG 27074 / LMG 4051 / NBRC 15346 / NCIMB 9279 / VKM B-1422 / R1).